The sequence spans 274 residues: Large ribosomal subunit protein uL2 (274 aa).

Disordered stretches follow at residues 35 to 55 (FGKK…RHRG) and 224 to 274 (AMNP…KLKG). The span at 45–55 (NHGRITTRHRG) shows a compositional bias: basic residues. Over residues 263–274 (KSSDKYIKKLKG) the composition is skewed to basic and acidic residues.

It belongs to the universal ribosomal protein uL2 family. In terms of assembly, part of the 50S ribosomal subunit. Forms a bridge to the 30S subunit in the 70S ribosome.

In terms of biological role, one of the primary rRNA binding proteins. Required for association of the 30S and 50S subunits to form the 70S ribosome, for tRNA binding and peptide bond formation. It has been suggested to have peptidyltransferase activity; this is somewhat controversial. Makes several contacts with the 16S rRNA in the 70S ribosome. The polypeptide is Large ribosomal subunit protein uL2 (Wolbachia pipientis subsp. Culex pipiens (strain wPip)).